The sequence spans 459 residues: Interleukin-7 receptor subunit alpha (459 aa).

Positions 1–20 (MTILGTTFGVFFSLLQVVSG) are cleaved as a signal peptide. The Extracellular portion of the chain corresponds to 21–241 (ESGYAQNGDL…NNHSGETNPT (221 aa)). An intrachain disulfide couples cysteine 42 to cysteine 57. Residues asparagine 49 and asparagine 65 are each glycosylated (N-linked (GlcNAc...) asparagine). Cystine bridges form between cysteine 74-cysteine 82 and cysteine 108-cysteine 118. The 101-residue stretch at 131–231 (APFDLSVIYR…PSYYFRTPEI (101 aa)) folds into the Fibronectin type-III domain. N-linked (GlcNAc...) asparagine glycosylation occurs at asparagine 182. Residues 217-221 (WSEWS) carry the WSXWS motif motif. A helical transmembrane segment spans residues 242–262 (LLTISILSVLSVVLLVILACV). Topologically, residues 263–459 (LWKKRIKPII…VTMSSFCQKR (197 aa)) are cytoplasmic. A Box 1 motif motif is present at residues 272-280 (IWPSLPDHK). The residue at position 282 (threonine 282) is a Phosphothreonine; by PKC. A disordered region spans residues 327 to 357 (TVPPQLEESETQRPGGDVQSPSWPSENVVTT). Residues 345–357 (QSPSWPSENVVTT) are compositionally biased toward polar residues.

It belongs to the type I cytokine receptor family. Type 4 subfamily. The IL7 receptor is a heterodimer of IL7R and IL2RG. The TSLP receptor is a heterodimer of CRLF2 and IL7R. Interacts with CD53. In terms of processing, N-glycosylated IL-7Ralpha binds IL7 300-fold more tightly than the unglycosylated form. Post-translationally, ubiquitinated by MARCHF8; leading to lysosomal degradation.

It localises to the cell membrane. Functionally, receptor for interleukin-7. Also acts as a receptor for thymic stromal lymphopoietin (TSLP). The protein is Interleukin-7 receptor subunit alpha (IL7R) of Callithrix jacchus (White-tufted-ear marmoset).